Here is a 171-residue protein sequence, read N- to C-terminus: Shikimate kinase (171 aa).

Residue 14–19 (GAGKST) coordinates ATP. S18 lines the Mg(2+) pocket. The substrate site is built by D36, R60, and G82. R120 contributes to the ATP binding site. R139 is a substrate binding site. ATP is bound at residue Q156.

The protein belongs to the shikimate kinase family. Monomer. Mg(2+) serves as cofactor.

It is found in the cytoplasm. It carries out the reaction shikimate + ATP = 3-phosphoshikimate + ADP + H(+). The protein operates within metabolic intermediate biosynthesis; chorismate biosynthesis; chorismate from D-erythrose 4-phosphate and phosphoenolpyruvate: step 5/7. Catalyzes the specific phosphorylation of the 3-hydroxyl group of shikimic acid using ATP as a cosubstrate. This is Shikimate kinase from Alteromonas mediterranea (strain DSM 17117 / CIP 110805 / LMG 28347 / Deep ecotype).